The following is a 592-amino-acid chain: Hepatocyte nuclear factor 1-alpha-B (592 aa).

The interval 1–31 (MASQLSYLQQELLRALLESGVTKEALKKALA) is dimerization. The region spanning 1–32 (MASQLSYLQQELLRALLESGVTKEALKKALAD) is the HNF-p1 domain. The disordered stretch occupies residues 54 to 78 (NCVQLPNGLGEPQMSEDESSDDGGD). The span at 67 to 77 (MSEDESSDDGG) shows a compositional bias: acidic residues. Residues 85-180 (KELERLSPEE…IARQFTHAGH (96 aa)) enclose the POU-specific atypical domain. 6 interaction with DNA regions span residues 128-130 (QRE), 141-147 (HLSQHLN), 153-156 (KTQK), 201-204 (RFKW), 261-263 (RVY), and 268-271 (NSGK). Residues 195 to 203 (KKMRRNRFK) carry the Nuclear localization signal motif. The homeobox; HNF1-type DNA-binding region spans 197–277 (MRRNRFKWGP…NSGKEEAFRH (81 aa)). 2 stretches are compositionally biased toward polar residues: residues 284–295 (YNGQQSSAQPLS) and 306–328 (RYTQ…TLSP). 2 disordered regions span residues 284–329 (YNGQ…LSPS) and 511–533 (KQVV…HNQD).

This sequence belongs to the HNF1 homeobox family. Binds DNA as dimer. Forms a homodimer or heterodimer with HNF1-alpha-A. Potentially also form a heterodimer with HNF1-beta. As to expression, liver.

It is found in the nucleus. Transcriptional activator that regulates the tissue specific expression of multiple genes, especially in pancreas and liver. Binds to the hepatocyte specific promoter element HP1. Binds to the inverted palindrome 5'-GTTAATNATTAAC-3'. This chain is Hepatocyte nuclear factor 1-alpha-B (hnf1a-b), found in Xenopus laevis (African clawed frog).